The sequence spans 411 residues: 2,3-bisphosphoglycerate-independent phosphoglycerate mutase 1 (411 aa).

The protein belongs to the BPG-independent phosphoglycerate mutase family. A-PGAM subfamily. Homotetramer. It depends on Mg(2+) as a cofactor.

The enzyme catalyses (2R)-2-phosphoglycerate = (2R)-3-phosphoglycerate. It functions in the pathway carbohydrate degradation; glycolysis; pyruvate from D-glyceraldehyde 3-phosphate: step 3/5. Inhibited to approximately 20% by EDTA. In terms of biological role, catalyzes the interconversion of 2-phosphoglycerate and 3-phosphoglycerate. The polypeptide is 2,3-bisphosphoglycerate-independent phosphoglycerate mutase 1 (apgM1) (Methanocaldococcus jannaschii (strain ATCC 43067 / DSM 2661 / JAL-1 / JCM 10045 / NBRC 100440) (Methanococcus jannaschii)).